Consider the following 1979-residue polypeptide: E3 ubiquitin-protein ligase TTC3 (1979 aa).

The interval 1–230 (MDDFAEGGLS…RHSCMQCVKQ (230 aa)) is interaction with POLG. TPR repeat units lie at residues 231 to 264 (GELM…RPEN) and 266 to 298 (LLYG…KNTW). Ser-378 carries the phosphoserine modification. Positions 422–457 (CDCHPEFLPPPSQPPRHKGKQKSRNNESEKPSFNSE) are disordered. 2 TPR repeats span residues 536 to 572 (VLVV…YPNE) and 576 to 609 (CLAY…ISRL). Positions 783-811 (LAQERMEEDLRESNPPKNEEPEETSDSAQ) are disordered. Ser-1009 is subject to Phosphoserine. Disordered stretches follow at residues 1021-1067 (NKGK…GPFA), 1214-1289 (QPDV…EEAK), 1402-1427 (QGSA…SSDS), 1574-1601 (KNDG…DEKT), 1757-1776 (MDSA…GSPT), 1788-1821 (KGAS…KKPS), and 1873-1927 (DEQK…PAPD). The span at 1036 to 1050 (VGSGAASVAPSSEAV) shows a compositional bias: low complexity. A Phosphoserine modification is found at Ser-1060. A compositionally biased stretch (basic and acidic residues) spans 1214–1227 (QPDVKSEALSEDVK). A compositionally biased stretch (low complexity) spans 1248-1257 (DSDSSSGSAS). Residues 1576–1586 (DGFDKECEPHP) show a composition bias toward basic and acidic residues. Polar residues-rich tracts occupy residues 1788–1799 (KGASQVSPSEQS) and 1808–1821 (GQAT…KKPS). Ser-1794 is modified (phosphoserine). Basic and acidic residues predominate over residues 1873–1890 (DEQKKKKPNPGKDKKTSE). The RING-type; atypical zinc-finger motif lies at 1931–1971 (CEICHEIFKSKNMRVLKCGHKFHKGCFKQWLKGQSTCPTCG).

In terms of assembly, interacts (when phosphorylated on Ser-378) with AKT1, AKT2 and AKT3 (when phosphorylated). Interacts with CIT. Interacts with POLG. Interacts with HSP70. Interacts with SMURF2. In terms of processing, phosphorylation on Ser-378 by Akt is required for ubiquitin ligase activity. Post-translationally, proteolytically cleaved into differently sized N- and C-terminal fragments.

It is found in the nucleus. The protein localises to the cytoplasm. It localises to the golgi apparatus. It catalyses the reaction S-ubiquitinyl-[E2 ubiquitin-conjugating enzyme]-L-cysteine + [acceptor protein]-L-lysine = [E2 ubiquitin-conjugating enzyme]-L-cysteine + N(6)-ubiquitinyl-[acceptor protein]-L-lysine.. It functions in the pathway protein modification; protein ubiquitination. Functionally, E3 ubiquitin-protein ligase which catalyzes the formation of 'Lys-48'-polyubiquitin chains. Mediates the ubiquitination and subsequent degradation of phosphorylated Akt (AKT1, AKT2 and AKT3) in the nucleus. Acts as a terminal regulator of Akt signaling after activation; its phosphorylation by Akt, which is a prerequisite for ubiquitin ligase activity, suggests the existence of a regulation mechanism required to control Akt levels after activation. Positively regulates TGFB1-induced epithelial-mesenchymal transition and myofibroblast differentiation by mediating the ubiquitination and subsequent degradation of SMURF2. Regulates neuronal differentiation by regulating actin remodeling and Golgi organization via a signaling cascade involving RHOA, CIT and ROCK. Inhibits cell proliferation. The polypeptide is E3 ubiquitin-protein ligase TTC3 (Ttc3) (Mus musculus (Mouse)).